The primary structure comprises 90 residues: Putative regulatory protein Dred_1699 (90 aa).

It belongs to the RemA family.

The protein is Putative regulatory protein Dred_1699 of Desulforamulus reducens (strain ATCC BAA-1160 / DSM 100696 / MI-1) (Desulfotomaculum reducens).